The chain runs to 360 residues: Peptide chain release factor 1 (360 aa).

Residue Q235 is modified to N5-methylglutamine.

Belongs to the prokaryotic/mitochondrial release factor family. Post-translationally, methylated by PrmC. Methylation increases the termination efficiency of RF1.

The protein localises to the cytoplasm. Its function is as follows. Peptide chain release factor 1 directs the termination of translation in response to the peptide chain termination codons UAG and UAA. This is Peptide chain release factor 1 from Janthinobacterium sp. (strain Marseille) (Minibacterium massiliensis).